The sequence spans 122 residues: MIQMQSHLRVADNSGARRVMCIKVLGGAGRRYASVGDIIVVSIKEAIPTGRVKKGDVRKAVVVRVAKDINRADGSTIRFDSNAAVLINNNGEPIGTRVFGPVPRELRAKNQVKIANMAPEVL.

Belongs to the universal ribosomal protein uL14 family. In terms of assembly, part of the 50S ribosomal subunit. Forms a cluster with proteins L3 and L19. In the 70S ribosome, L14 and L19 interact and together make contacts with the 16S rRNA in bridges B5 and B8.

Binds to 23S rRNA. Forms part of two intersubunit bridges in the 70S ribosome. The sequence is that of Large ribosomal subunit protein uL14 from Hyphomonas neptunium (strain ATCC 15444).